The chain runs to 378 residues: Protein-glutamate methylesterase/protein-glutamine glutaminase 2 (378 aa).

In terms of domain architecture, Response regulatory spans 4–121 (KVLVVDDSGF…SRNPEKVKQL (118 aa)). Position 55 is a 4-aspartylphosphate (Asp55). Residues 141-188 (APAPAAAPTPAPIPAAAPSSFGSHSAPARPAPAPAPTRAPAASASSPA) are disordered. Positions 145–155 (AAAPTPAPIPA) are enriched in pro residues. Composition is skewed to low complexity over residues 156 to 168 (AAPS…SAPA) and 178 to 188 (RAPAASASSPA). Residues 187–378 (PAPKRKNYKL…IGKHIVEACV (192 aa)) form the CheB-type methylesterase domain. Catalysis depends on residues Ser202, His229, and Asp322.

The protein belongs to the CheB family. Post-translationally, phosphorylated by CheA. Phosphorylation of the N-terminal regulatory domain activates the methylesterase activity.

Its subcellular location is the cytoplasm. It catalyses the reaction [protein]-L-glutamate 5-O-methyl ester + H2O = L-glutamyl-[protein] + methanol + H(+). It carries out the reaction L-glutaminyl-[protein] + H2O = L-glutamyl-[protein] + NH4(+). Functionally, involved in chemotaxis. Part of a chemotaxis signal transduction system that modulates chemotaxis in response to various stimuli. Catalyzes the demethylation of specific methylglutamate residues introduced into the chemoreceptors (methyl-accepting chemotaxis proteins or MCP) by CheR. Also mediates the irreversible deamidation of specific glutamine residues to glutamic acid. The polypeptide is Protein-glutamate methylesterase/protein-glutamine glutaminase 2 (Pseudomonas fluorescens (strain Pf0-1)).